The following is a 364-amino-acid chain: MQDRQKAQDYRALLLADTPLIDVRAPIEFEQGAMPGAINLPLMMDDERAAVGTCYKRQGADAALALGHRLVCGDIRQQRLEAWKAAYQRFPNGYLCCARGGQRSHIVQRWLQETGIDCPLIEGGYKALRQTAIQATWQLAQKPILLIGGCTGSGKTQLVRQQPNGVDLEGLARHRGSSFGRTLNPQLSQASFENKLAVELLKINARQTLKRWVLEDEGRTIGANHLPECLRERMAQAPIAVVEDPFALRLERLREEYFICMHHDFTHAYGDEAGWQAYSEYLHHGLFAIRRRLGLQRFAELTDTLDRALAEQLSSGSTDGHMAWLVPLLNEYYDPMYRYQLEKKAANIVFRGPWQDVANWLKAQ.

The Rhodanese domain maps to 14–137; it reads LLADTPLIDV…LRQTAIQATW (124 aa). C97 (S-selanylcysteine intermediate) is an active-site residue.

The protein belongs to the SelU family. As to quaternary structure, monomer.

The enzyme catalyses 5-methylaminomethyl-2-thiouridine(34) in tRNA + selenophosphate + (2E)-geranyl diphosphate + H2O + H(+) = 5-methylaminomethyl-2-selenouridine(34) in tRNA + (2E)-thiogeraniol + phosphate + diphosphate. The catalysed reaction is 5-methylaminomethyl-2-thiouridine(34) in tRNA + (2E)-geranyl diphosphate = 5-methylaminomethyl-S-(2E)-geranyl-thiouridine(34) in tRNA + diphosphate. It catalyses the reaction 5-methylaminomethyl-S-(2E)-geranyl-thiouridine(34) in tRNA + selenophosphate + H(+) = 5-methylaminomethyl-2-(Se-phospho)selenouridine(34) in tRNA + (2E)-thiogeraniol. It carries out the reaction 5-methylaminomethyl-2-(Se-phospho)selenouridine(34) in tRNA + H2O = 5-methylaminomethyl-2-selenouridine(34) in tRNA + phosphate. Functionally, involved in the post-transcriptional modification of the uridine at the wobble position (U34) of tRNA(Lys), tRNA(Glu) and tRNA(Gln). Catalyzes the conversion of 2-thiouridine (S2U-RNA) to 2-selenouridine (Se2U-RNA). Acts in a two-step process involving geranylation of 2-thiouridine (S2U) to S-geranyl-2-thiouridine (geS2U) and subsequent selenation of the latter derivative to 2-selenouridine (Se2U) in the tRNA chain. The polypeptide is tRNA 2-selenouridine synthase (Salmonella heidelberg (strain SL476)).